A 77-amino-acid chain; its full sequence is Secapin (77 aa).

The N-terminal stretch at 1–32 (MKNYSKNATYLITVLLFSFVAMLLIIPSKCEA) is a signal peptide. Positions 33–52 (VSNDMQPLEARTADLVQQPR) are excised as a propeptide. Cysteines 61 and 72 form a disulfide.

This sequence belongs to the secapin family. As to expression, expressed by the venom gland.

It is found in the secreted. Its function is as follows. Nontoxic peptide. The chain is Secapin from Apis cerana cerana (Oriental honeybee).